Consider the following 494-residue polypeptide: MTMMTMMMVSWSAFLQICWILMVRANQFNPGEPSGCRTNTPQSDLNSFLWTIKRDPPSYLYGTIHVPYTRVWDFIPQNSKQAFQESSVVYFELELTDPSTISALSRCQLLPAGQNLQDVLPPELYLRLKTHLEYVRLMLPSWMTPDQRGKGLYAEYLFNAIAGNWERKRPVWVMLMVNSLTEADIKTRGVPVLDLYLAQEAERMKKQTGAVEKVEEQCSPLNTLDFSQVIFALNQTLLQQESVRAGSLQVPYTTEHLITHYNCGDLHSIISHDTAQVPNFNNVTLRPSDQVTAQQIDSYFRRELIYKRNERMGRRVTALLQEQPHKTFFFAFGAGHFLGNNSVIDVLRREGYEVEHTPAGQPLHRRSGWRSADPADTDAALQPFLHHSRHHELQLLEGLELLEKVEHKLKKKHRRNKLKKQRQFNDLWVRMEDSVTAEAPPPLIHIINGYITVQTHPQEHERANHDRTFSGSSSRTGPALSALAVCVQMLRLLL.

Positions 1–25 (MTMMTMMMVSWSAFLQICWILMVRA) are cleaved as a signal peptide. Topologically, residues 26–467 (NQFNPGEPSG…QEHERANHDR (442 aa)) are extracellular. Residues Asn-234 and Asn-282 are each glycosylated (N-linked (GlcNAc...) asparagine). A helical membrane pass occupies residues 468 to 488 (TFSGSSSRTGPALSALAVCVQ). Residues 489–494 (MLRLLL) are Cytoplasmic-facing.

It belongs to the TIKI family. Mn(2+) is required as a cofactor. Co(2+) serves as cofactor.

It localises to the cell membrane. Metalloprotease that acts as a negative regulator of the Wnt signaling pathway by mediating the cleavage of the N-terminal residues of a subset of Wnt proteins. Following cleavage, Wnt proteins become oxidized and form large disulfide-bond oligomers, leading to their inactivation. The protein is Metalloprotease TIKI1 (trabd2a) of Danio rerio (Zebrafish).